The sequence spans 1136 residues: Mitochondrial 3' processome subunit 3 (1136 aa).

The N-terminal 97 residues, Met-1 to Asp-97, are a transit peptide targeting the mitochondrion.

In terms of assembly, component of the mitochondrial 3' processome (MPsome) complex composed at least of terminal uridylyltransferase KRET1/TUT1, 3'-5' exonuclease DSS1, MPSS1, MPSS2 and MPSS3. Within the complex, interacts with KRET1.

It is found in the mitochondrion. Its function is as follows. As part of the mitochondrial 3' processome (MPsome), involved in the maturation of guided RNA (gRNA) precursors. In Trypanosoma brucei brucei, this protein is Mitochondrial 3' processome subunit 3.